Reading from the N-terminus, the 293-residue chain is ATP phosphoribosyltransferase (293 aa).

Belongs to the ATP phosphoribosyltransferase family. Long subfamily. It depends on Mg(2+) as a cofactor.

It is found in the cytoplasm. It carries out the reaction 1-(5-phospho-beta-D-ribosyl)-ATP + diphosphate = 5-phospho-alpha-D-ribose 1-diphosphate + ATP. It participates in amino-acid biosynthesis; L-histidine biosynthesis; L-histidine from 5-phospho-alpha-D-ribose 1-diphosphate: step 1/9. With respect to regulation, feedback inhibited by histidine. Catalyzes the condensation of ATP and 5-phosphoribose 1-diphosphate to form N'-(5'-phosphoribosyl)-ATP (PR-ATP). Has a crucial role in the pathway because the rate of histidine biosynthesis seems to be controlled primarily by regulation of HisG enzymatic activity. This is ATP phosphoribosyltransferase from Solidesulfovibrio magneticus (strain ATCC 700980 / DSM 13731 / RS-1) (Desulfovibrio magneticus).